We begin with the raw amino-acid sequence, 574 residues long: Fusion glycoprotein F0 (574 aa).

Positions 1 to 25 are cleaved as a signal peptide; that stretch reads MELPILKANAITTILAAVTFCFASS. Topologically, residues 26–524 are extracellular; sequence QNITEEFYQS…HVNAGKSTTN (499 aa). 2 N-linked (GlcNAc...) asparagine; by host glycosylation sites follow: asparagine 27 and asparagine 70. 7 disulfide bridges follow: cysteine 37/cysteine 439, cysteine 69/cysteine 212, cysteine 313/cysteine 343, cysteine 322/cysteine 333, cysteine 358/cysteine 367, cysteine 382/cysteine 393, and cysteine 416/cysteine 422. Residues 76–96 adopt a coiled-coil conformation; that stretch reads VKLINQELDKYKNAVTELQLL. N-linked (GlcNAc...) asparagine; by host glycans are attached at residues asparagine 116, asparagine 120, and asparagine 126. The fusion peptide stretch occupies residues 137–157; that stretch reads FLGFLLGVGSAIASGIAVSKV. The stretch at 158 to 209 forms a coiled coil; that stretch reads LHLEGEVNKIKSALLSTNKAVVSLSNGVSVLTSKVLDLKNYIDKQLLPIVNK. Residues 481–516 are a coiled coil; that stretch reads LVFPSDEFDASISQVNEKINQSLAFIRKSDELLHHV. N-linked (GlcNAc...) asparagine; by host glycosylation is present at asparagine 500. A helical transmembrane segment spans residues 525–550; that stretch reads IMITTIIIVIIVILLSLIAVGLLLYC. Cysteine 550 carries S-palmitoyl cysteine; by host lipidation. The Cytoplasmic segment spans residues 551-574; the sequence is KARSTPVTLSKDQLSGINNIAFSN.

The protein belongs to the paramyxoviruses fusion glycoprotein family. Homotrimer. Heterodimer with fusion protein F2; disulfide-linked. Interacts with host NCL; this interaction plays a role in viral entry into the host cell. As a heterodimer with F2, interacts with host heparan sulfate. As a heterodimer with F2, interacts with host IGF1R; this interaction activates PRKCZ/PKCzeta that recruits NCL/nucleolin from the host nucleus to the plasma membrane. Part of a complex composed of F1, F2 and G glycoproteins. As a heterodimer with F2, interacts with host RHOA; this interaction facilitates virus-induced syncytium formation. In terms of assembly, homotrimer. Heterodimer with fusion protein F1; disulfide-linked. As a heterodimer with F1, interacts with host heparan sulfate. As a heterodimer with F1, interacts with host IGF1R; this interaction activates PRKCZ/PKCzeta that recruits NCL/nucleolin from the host nucleus to the plasma membrane. Part of a complex composed of F1, F2 and G glycoproteins. As a heterodimer with F1, interacts with host RHOA; this interaction facilitates virus-induced syncytium formation. The F glycoprotein is synthesized as a F0 inactive precursor that is heavily N-glycosylated and processed at two sites by a host furin-like protease probably in the Golgi. The cleavage site between p27 and F1 may occur after endocytosis to yield the mature F1 and F2 proteins. Both cleavages are required for membrane fusion and p27 is released from the processed protein.

It is found in the host Golgi apparatus membrane. The protein resides in the virion membrane. It localises to the host cell membrane. Functionally, inactive precursor that is cleaved at two sites by a furin-like protease to give rise to the mature F1 and F2 fusion glycoproteins. In terms of biological role, class I viral fusion protein. Under the current model, the protein has at least 3 conformational states: pre-fusion native state, pre-hairpin intermediate state, and post-fusion hairpin state. During viral and plasma cell membrane fusion, the coiled coil regions assume a trimer-of-hairpins structure, positioning the fusion peptide in close proximity to the C-terminal region of the ectodomain. The formation of this structure appears to drive apposition and subsequent fusion of viral and cellular membranes leading to delivery of the nucleocapsid into the cytoplasm. This fusion is pH independent and occurs at the plasma or endosomal membrane. The trimer of F1-F2 (F protein) also facilitates the attachment to host cell by binding to host heparan sulfate. F protein is involved in the entry into the host cell through the interaction with host IGF1R. This interaction activates PRKCZ/PKCzeta that recruits host NCL/nucleolin to the apical cell surface where it can bind fusion glycoprotein F1. Later in infection, F protein expressed at the plasma membrane of infected cells can mediate fusion with adjacent cells to form syncytia, a cytopathic effect that could lead to tissue necrosis. F protein may trigger p53-dependent apoptosis. Its function is as follows. Major determinant of the species specificity of RSV infection. The trimer of F1-F2 (F protein) also facilitates the attachment to host cell by binding to host heparan sulfate. F protein is involved in the entry into the host cell through the interaction with host IGF1R. This interaction activates PRKCZ/PKCzeta that recruits host NCL/nucleolin to the apical cell surface where it can bind fusion glycoprotein F1. Later in infection, F protein expressed at the plasma membrane of infected cells can mediate fusion with adjacent cells to form syncytia, a cytopathic effect that could lead to tissue necrosis. F protein seems to trigger p53-dependent apoptosis. The chain is Fusion glycoprotein F0 (F) from Homo sapiens (Human).